A 1036-amino-acid chain; its full sequence is Cellulose synthase-like protein D1 (1036 aa).

A disordered region spans residues M1 to N99. 2 stretches are compositionally biased toward polar residues: residues T9–R19 and N69–E80. Gly residues predominate over residues N86–P95. 2 helical membrane-spanning segments follow: residues I178–W198 and A208–L228. D308 is a catalytic residue. The interval A626–N665 is disordered. The span at T631–S642 shows a compositional bias: low complexity. The active site involves D741. Transmembrane regions (helical) follow at residues I817–F837, I848–E868, L895–L915, G938–A958, I962–V982, and T1002–I1022.

The protein belongs to the glycosyltransferase 2 family. Plant cellulose synthase-like D subfamily.

The protein resides in the golgi apparatus membrane. Its function is as follows. Thought to be a Golgi-localized beta-glycan synthase that polymerize the backbones of noncellulosic polysaccharides (hemicelluloses) of plant cell wall. This Arabidopsis thaliana (Mouse-ear cress) protein is Cellulose synthase-like protein D1 (CSLD1).